Reading from the N-terminus, the 202-residue chain is Snake venom metalloproteinase Ac1 (202 aa).

The region spanning 6-202 (RYMEIVIVVD…ENPPCILNKP (197 aa)) is the Peptidase M12B domain. Residues Glu-9 and Asp-93 each coordinate Ca(2+). 2 disulfide bridges follow: Cys-117–Cys-197 and Cys-157–Cys-181. Residue His-142 coordinates Zn(2+). The active site involves Glu-143. Residues His-146 and His-152 each contribute to the Zn(2+) site. Residues Cys-197 and Asn-200 each coordinate Ca(2+).

The protein belongs to the venom metalloproteinase (M12B) family. P-I subfamily. In terms of assembly, monomer. The cofactor is Zn(2+). As to expression, expressed by the venom gland.

It localises to the secreted. Functionally, snake venom metalloproteinase that impairs hemostasis in the envenomed animal. The chain is Snake venom metalloproteinase Ac1 from Deinagkistrodon acutus (Hundred-pace snake).